The chain runs to 652 residues: Leucine-rich repeat-containing protein 4 (652 aa).

Positions 1–40 (MKLLWQVTVHHTWNAVLLPVVYLTAQVWILCAAIAAAASA) are cleaved as a signal peptide. The 34-residue stretch at 41–74 (GPQNCPSVCSCSNQFSKVVCTRRGLSEVPQGIPS) folds into the LRRNT domain. At 41–526 (GPQNCPSVCS…SLDEVMKTTK (486 aa)) the chain is on the extracellular side. 2 disulfides stabilise this stretch: Cys45–Cys51 and Cys49–Cys60. LRR repeat units follow at residues 75-96 (NTRY…TFRH), 99-120 (HLEV…AFNG), 123-144 (SLNT…AFEY), 147-168 (KLRE…AFNR), 171-193 (SLMR…AFEG), 196-217 (NLKY…TPLV), 218-239 (GLEE…SFHG), 242-263 (SLKK…AFDG), and 266-287 (SLVE…LFTP). N-linked (GlcNAc...) asparagine glycosylation is found at Asn276, Asn321, Asn362, Asn387, Asn409, Asn433, Asn439, and Asn449. The region spanning 299–351 (NPWNCDCDILWLAWWLREYIPTNSTCCGRCHAPMHMRGRYLVEVDQAAFQCSA) is the LRRCT domain. 2 disulfide bridges follow: Cys303/Cys328 and Cys305/Cys349. The region spanning 352–441 (PFIMDAPRDL…SNASAYLNVS (90 aa)) is the Ig-like domain. An intrachain disulfide couples Cys373 to Cys423. Residues 527 to 547 (IIIGCFVAVTLLAAAMLIVFY) traverse the membrane as a helical segment. Over 548 to 652 (KLRKRHQQRS…TKDKVQETQI (105 aa)) the chain is Cytoplasmic.

As to quaternary structure, interacts (via LRR repeats) with NTNG2. Interacts with DLG4. Forms a complex with DLG4 and with NMDA receptors. N-glycosylated. In terms of tissue distribution, specifically expressed in brain. In the hippocampus, parietal cortex and piriform cortex expressed in proximal segments of CA1 pyramidal neurons.

Its subcellular location is the membrane. The protein localises to the postsynaptic cell membrane. Functionally, synaptic adhesion protein. Regulates the formation of exitatory synapses through the recruitment of pre-and-postsynaptic proteins. Organize the lamina/pathway-specific differentiation of dendrites. Plays an important role for auditory synaptic responses. Involved in the suppression of glioma. This chain is Leucine-rich repeat-containing protein 4 (Lrrc4), found in Mus musculus (Mouse).